The following is a 255-amino-acid chain: Putative expansin-A27 (255 aa).

The first 24 residues, 1–24, serve as a signal peptide directing secretion; that stretch reads MGAMAENLLVLCTILAARMALAAA. An Expansin-like EG45 domain is found at 45–160; that stretch reads GGACGYGNLY…RRVRCWRRGG (116 aa). The 80-residue stretch at 170-249 folds into the Expansin-like CBD domain; sequence HFELVLVANV…GWKFGQTFST (80 aa).

Belongs to the expansin family. Expansin A subfamily.

Its subcellular location is the secreted. It is found in the cell wall. It localises to the membrane. Functionally, may cause loosening and extension of plant cell walls by disrupting non-covalent bonding between cellulose microfibrils and matrix glucans. No enzymatic activity has been found. May be required for rapid internodal elongation in deepwater rice during submergence. This is Putative expansin-A27 (EXPA27) from Oryza sativa subsp. japonica (Rice).